The sequence spans 883 residues: MLSRLFRMHGQFVASHPWEVIVGTVTLTICMMSMNMFTGNDKICGWNYACPKFEEDVLSSDIIILTITRCIAILYIYFQFQNLRQLGSKYILGIAGLFTIFSSFVFSTVVIHFLDKELTGLNEALPFFLLLIDLSKASALAKFALSSNSQDEVRDNIARGMAILGPTFTLEALVECLVIGVGTMSGVRQLEIMCCFGCMSVLANYFAFMTFFPACVSLVLELSRESREGRPIWQLSQFASVLEEEEDNKPNPVTQRVKMIMSLGLVLVHAHSRWISEPSSQNSTSISDHEVTTMLDDMMPKRVEPSMPLWQFYLSRMVTMDVEQIITLGLALLLAVKYIFFEQTETESTFSMKNPIISPVAVQKKQIESCCRREPEQEKTVHVSTTEEASSKEETEAVIKPLPLETSPKAKFIVGDSSPLELSPEDKNTMFDLPEEPRPLDECVRILKNPDKGAQYLTDAEVISLVNAKHIPAYKLETMMESPREGVAIRRQMLSDKLPQRSALQSLPYKNYNYSLVMGACCENVIGYMPIPVGVAGPLLLNNKEYQVPMATTEGCLVASTNRGCRAIMLGGGAKSRVLADGMTRGPVVRLPTACDAAEVKAWLDSAEGFKVIKDAFDSTSRFARLGRLQNCVAGRNLYIRFQSKTGDAMGMNMISKVTEQALARLQEEFPDLHVLAVSGNYCTDKKPAAINWIEGRGKSVVCEAIIPAKVVREVLKSSTEALVEVNINKNFIGSAMAGSIGGYNAHAANIVTAIYIACGQDAAQNVGSSNCITIMEATGPTYEDLYISCTMPSIEIGTVGGGTNLAPQQACLQMLGVQGASTETPGKNACQLAQIVCSTVMAGELSLMAALAAGHLVKSHMVHNRSKINLQDLPGTCTKKAA.

At 1–9 the chain is on the cytoplasmic side; the sequence is MLSRLFRMH. Residues 10-39 traverse the membrane as a helical segment; it reads GQFVASHPWEVIVGTVTLTICMMSMNMFTG. At 40–56 the chain is on the lumenal side; that stretch reads NDKICGWNYACPKFEED. The chain crosses the membrane as a helical span at residues 57–78; that stretch reads VLSSDIIILTITRCIAILYIYF. At 79 to 89 the chain is on the cytoplasmic side; it reads QFQNLRQLGSK. A helical transmembrane segment spans residues 90–114; it reads YILGIAGLFTIFSSFVFSTVVIHFL. Residues 115–123 lie on the Lumenal side of the membrane; sequence DKELTGLNE. A helical transmembrane segment spans residues 124–149; the sequence is ALPFFLLLIDLSKASALAKFALSSNS. Residues 150–159 are Cytoplasmic-facing; that stretch reads QDEVRDNIAR. A helical membrane pass occupies residues 160 to 187; sequence GMAILGPTFTLEALVECLVIGVGTMSGV. The Lumenal portion of the chain corresponds to 188-191; that stretch reads RQLE. Residues 192–220 form a helical membrane-spanning segment; the sequence is IMCCFGCMSVLANYFAFMTFFPACVSLVL. Over 221 to 249 the chain is Cytoplasmic; it reads ELSRESREGRPIWQLSQFASVLEEEEDNK. Residues 250–276 form a helical membrane-spanning segment; the sequence is PNPVTQRVKMIMSLGLVLVHAHSRWIS. At 277–316 the chain is on the lumenal side; that stretch reads EPSSQNSTSISDHEVTTMLDDMMPKRVEPSMPLWQFYLSR. A glycan (N-linked (GlcNAc...) asparagine) is linked at Asn-282. A helical membrane pass occupies residues 317–341; that stretch reads MVTMDVEQIITLGLALLLAVKYIFF. Topologically, residues 342–883 are cytoplasmic; the sequence is EQTETESTFS…LPGTCTKKAA (542 aa). Positions 373–396 are disordered; that stretch reads REPEQEKTVHVSTTEEASSKEETE. Active-site charge relay system residues include Glu-554, Lys-686, and Asp-762. His-861 (proton donor) is an active-site residue.

This sequence belongs to the HMG-CoA reductase family. In terms of assembly, homotetramer. Homodimer.

It is found in the endoplasmic reticulum membrane. The protein localises to the peroxisome membrane. It carries out the reaction (R)-mevalonate + 2 NADP(+) + CoA = (3S)-3-hydroxy-3-methylglutaryl-CoA + 2 NADPH + 2 H(+). Its pathway is metabolic intermediate biosynthesis; (R)-mevalonate biosynthesis; (R)-mevalonate from acetyl-CoA: step 3/3. Its function is as follows. Catalyzes the conversion of (3S)-hydroxy-3-methylglutaryl-CoA (HMG-CoA) to mevalonic acid, the rate-limiting step in the synthesis of cholesterol and other isoprenoids, thus plays a critical role in cellular cholesterol homeostasis. The sequence is that of 3-hydroxy-3-methylglutaryl-coenzyme A reductase (hmgcr) from Xenopus laevis (African clawed frog).